The primary structure comprises 515 residues: Phospholipase A1-Igamma1, chloroplastic (515 aa).

The transit peptide at 1–44 directs the protein to the chloroplast; it reads MATIPSHNLRPHTTNQRTQYSLSFRPHFSRSTLITFPARSSPAR. The GXSXG signature appears at 301-305; that stretch reads GHSLG. Serine 303 serves as the catalytic Acyl-ester intermediate. Active-site charge relay system residues include aspartate 366 and histidine 422.

This sequence belongs to the AB hydrolase superfamily. Lipase family. As to expression, ubiquitous. Highly expressed in leaves.

Its subcellular location is the plastid. The protein localises to the chloroplast. The catalysed reaction is 1,2-dihexadecanoyl-sn-glycero-3-phosphocholine + H2O = 2-hexadecanoyl-sn-glycero-3-phosphocholine + hexadecanoate + H(+). The enzyme catalyses a 1,2-diacyl-3-O-(beta-D-galactosyl)-sn-glycerol + H2O = an acyl-3-O-(beta-D-galactosyl)-sn-glycerol + a fatty acid + H(+). It catalyses the reaction a 1,2-diacyl-3-O-[alpha-D-galactosyl-(1-&gt;6)-beta-D-galactosyl]-sn-glycerol + H2O = acyl-3-O-[alpha-D-galactosyl-(1-&gt;6)-beta-D-galactosyl]-sn-glycerol + a fatty acid + H(+). In terms of biological role, acylhydrolase with a broad specificity. Catalyzes the hydrolysis of phosphatidylcholine at the sn-1 position. Moderate activity toward phosphatidylcholine (PC), monogalactosyldiacylglycerol (MGDG), digalactosyldiacylglycerol (DGDG) and triacylglycerol (TAG). May display dual sn-1/sn-2 substrate specificity. Could be involved in early wound response. The sequence is that of Phospholipase A1-Igamma1, chloroplastic from Arabidopsis thaliana (Mouse-ear cress).